A 462-amino-acid polypeptide reads, in one-letter code: MDTGKIVQIIGPVIDVKFEISFIPKINFALEIKIKNKKLIMEVMQQIGDGIVRCILMGSSDGLKRGLKVFNLNKGIEVPVGKPTLGRIMNVLGDPIDRKGKILSSEYRPIHNKSPSYNEISSSDELLETGIKIIDLICPFAKGGKIGLFGGAGVGKTVNMMELIRNIAIEHSGYSVFSGVGERTREGNDFYNEMISSNVIDKVSLVYGQMNEPPGNRLRVALTGLTLAEKFRDEGNDVLFFVDNIYRYTLAGTEVSALLGRIPSAVGYQPTLSEEMGILQERITSTKSGSITSVQAIYVPADDLTDPSPATTFVHLDATVVLSRQIASLGIYPAIDPLDSTSRQLDPLIVGEDHYLVARKIQSILQRYKDLKDIIAILGIDELSEEDKILVSRARKIQRFLSQPFFVAEIFTGFSGKYVTLKDTIDGFNSIINGEYDYIPEQAFYMTGNISDVLDKYKKFYS.

150–157 (GGAGVGKT) contacts ATP.

This sequence belongs to the ATPase alpha/beta chains family. As to quaternary structure, F-type ATPases have 2 components, CF(1) - the catalytic core - and CF(0) - the membrane proton channel. CF(1) has five subunits: alpha(3), beta(3), gamma(1), delta(1), epsilon(1). CF(0) has three main subunits: a(1), b(2) and c(9-12). The alpha and beta chains form an alternating ring which encloses part of the gamma chain. CF(1) is attached to CF(0) by a central stalk formed by the gamma and epsilon chains, while a peripheral stalk is formed by the delta and b chains.

The protein localises to the cell membrane. The enzyme catalyses ATP + H2O + 4 H(+)(in) = ADP + phosphate + 5 H(+)(out). Its function is as follows. Produces ATP from ADP in the presence of a proton gradient across the membrane. The catalytic sites are hosted primarily by the beta subunits. This chain is ATP synthase subunit beta, found in Wigglesworthia glossinidia brevipalpis.